Consider the following 570-residue polypeptide: Putative diflavin flavoprotein A 6 (570 aa).

The segment at 38-231 (AKGTTANSYL…FPTRLYATGH (194 aa)) is zinc metallo-hydrolase. The 143-residue stretch at 260-402 (VALIYASAYG…AGTDFAQALK (143 aa)) folds into the Flavodoxin-like domain. A flavodoxin-reductase-like region spans residues 421-570 (VGRIVGSLCV…VHHRKSGNHY (150 aa)).

This sequence in the N-terminal section; belongs to the zinc metallo-hydrolase group 3 family. It in the C-terminal section; belongs to the flavodoxin reductase family. Requires Fe cation as cofactor.

Mediates electron transfer from NADH to oxygen, reducing it to water. This modular protein has 3 redox cofactors, in other organisms the same activity requires 2 or 3 proteins. This Nostoc sp. (strain PCC 7120 / SAG 25.82 / UTEX 2576) protein is Putative diflavin flavoprotein A 6 (dfa6).